Consider the following 297-residue polypeptide: MDVAIIGGGAWGSALYKALLEKSSVALVSRSGREGIHQCSLQEALEARFLVLAIASSALRGWLNEANLPPKTKILVACKGIEEGSGALVSEILEEFLPRENLAYLAGPSFAKEVREGLPCALVIHSHHLELAQEMSQFFPSWIRLYVENDVVGGEVCGAYKNVIAIAGGICDGLGLGYNAKASLVARGLVEMARFGQYFGAKIETFLGLSGAGDLFLTSGSTLSRNYRVGLGLAQGKSLEEILIELGEVAEGIKTARAITQIAQREGIHAPIAHEVNAILQGKNPKESLKDLLSHGR.

The NADPH site is built by Trp-11, Arg-30, and Lys-79. The sn-glycerol 3-phosphate site is built by Lys-79, Gly-107, and Ser-109. NADPH is bound at residue Ala-111. The sn-glycerol 3-phosphate site is built by Lys-161, Asp-214, Ser-224, Arg-225, and Asn-226. Lys-161 serves as the catalytic Proton acceptor. Arg-225 serves as a coordination point for NADPH. NADPH is bound by residues Val-249 and Glu-251.

Belongs to the NAD-dependent glycerol-3-phosphate dehydrogenase family.

It localises to the cytoplasm. It catalyses the reaction sn-glycerol 3-phosphate + NAD(+) = dihydroxyacetone phosphate + NADH + H(+). The enzyme catalyses sn-glycerol 3-phosphate + NADP(+) = dihydroxyacetone phosphate + NADPH + H(+). The protein operates within membrane lipid metabolism; glycerophospholipid metabolism. In terms of biological role, catalyzes the reduction of the glycolytic intermediate dihydroxyacetone phosphate (DHAP) to sn-glycerol 3-phosphate (G3P), the key precursor for phospholipid synthesis. The polypeptide is Glycerol-3-phosphate dehydrogenase [NAD(P)+] (Wolinella succinogenes (strain ATCC 29543 / DSM 1740 / CCUG 13145 / JCM 31913 / LMG 7466 / NCTC 11488 / FDC 602W) (Vibrio succinogenes)).